The primary structure comprises 456 residues: Cysteine--tRNA ligase (456 aa).

Position 28 (Cys28) interacts with Zn(2+). The 'HIGH' region motif lies at 30–40 (MTVYDYCHLGH). 3 residues coordinate Zn(2+): Cys209, His234, and Glu238. A 'KMSKS' region motif is present at residues 266-270 (KMSKS). Lys269 contacts ATP.

The protein belongs to the class-I aminoacyl-tRNA synthetase family. In terms of assembly, monomer. The cofactor is Zn(2+).

The protein localises to the cytoplasm. The catalysed reaction is tRNA(Cys) + L-cysteine + ATP = L-cysteinyl-tRNA(Cys) + AMP + diphosphate. This chain is Cysteine--tRNA ligase, found in Dechloromonas aromatica (strain RCB).